Here is a 468-residue protein sequence, read N- to C-terminus: Elongation factor 1-alpha (468 aa).

In terms of domain architecture, tr-type G spans lysine 6–serine 244. The segment at glycine 15 to serine 22 is G1. Glycine 15–serine 22 is a GTP binding site. Positions glycine 71–aspartate 75 are G2. The tract at residues aspartate 92–glycine 95 is G3. GTP contacts are provided by residues aspartate 92–histidine 96 and asparagine 154–aspartate 157. The tract at residues asparagine 154–aspartate 157 is G4. A G5 region spans residues serine 195 to tryptophan 197. 5-glutamyl glycerylphosphorylethanolamine occurs at positions 303 and 376.

The protein belongs to the TRAFAC class translation factor GTPase superfamily. Classic translation factor GTPase family. EF-Tu/EF-1A subfamily.

The protein localises to the cytoplasm. Functionally, this protein promotes the GTP-dependent binding of aminoacyl-tRNA to the A-site of ribosomes during protein biosynthesis. In Hydra vulgaris (Hydra), this protein is Elongation factor 1-alpha.